Reading from the N-terminus, the 447-residue chain is Interferon-induced protein 44-like (447 aa).

The TLDc domain occupies 1–159 (MKVTARLTWI…PVECEIFRVD (159 aa)).

Belongs to the IFI44 family. In terms of assembly, HA-28 antigen forms a complex with Kb MHC in BALB.B donor cells. Interacts with FKBP5; this interaction modulates IKBKB and IKBKE kinase activities. As to expression, expressed on cells of the hematopoietic lineage. Detected in transformed cell lines of the macrophage and B-cell lineage. Expressed in spleen and bone marrow.

The protein resides in the cytoplasm. Functionally, type I interferon-stimulated gene (ISG) that plays a critical role in antiviral and antibacterial activity. During bacterial infection, promotes macrophage differentiation and facilitates inflammatory cytokine secretion. Plays a role in the control of respiratory syncycial virus/RSV infection, reducing the ability of the virus to replicate. Acts as a feedback regulator of IFN responses by negatively regulating IKBKB kinase activity through interaction with FKBP5. Precursor of the histocompatibility antigen HA-28 in BALB.B mice. More generally, minor histocompatibility antigens refer to immunogenic peptide which, when complexed with MHC, can generate an immune response after recognition by specific T-cells. The peptides are derived from polymorphic intracellular proteins, which are cleaved by normal pathways of antigen processing. The binding of these peptides to MHC molecules and its expression on the cell surface can stimulate T-cell responses and thereby trigger graft rejection or graft-versus-host disease (GVHD). More specifically, HA-28 minor antigen is transcribed in the BALB.B donor but not in host C57BL/6 cells. HA-28 is presented to the donor BALB.B cell surface by Kb MHC. This complex HA-28/Kb MHC elicits cytotoxic T-cell response in C57BL/6 mice immunized with BALB.B spleen cells. It induces C57BL/6 mice cells recognition and lysis by CD8 T-cell from BALB.B mice. This is Interferon-induced protein 44-like (Ifi44l) from Mus musculus (Mouse).